The sequence spans 500 residues: NF-kappa-B inhibitor cactus (500 aa).

Positions 1–43 (MPSPTKAAEAATKATATSDCSCSAASVEQRAPSNAANPSSSLA) are enriched in low complexity. 2 disordered regions span residues 1 to 148 (MPSP…MRLK) and 171 to 212 (LNNL…APPS). Position 45 is a phosphoserine; by PKC (Ser-45). Polar residues predominate over residues 69–86 (NETSDSGFISGPQSSQIF). Residues 118–130 (IIDEEEDQEEQEK) show a composition bias toward acidic residues. Residue Ser-144 is modified to Phosphoserine; by PKC. A compositionally biased stretch (polar residues) spans 171 to 189 (LNNLGQSSSTQITGRSKVQ). Thr-183 is modified (phosphothreonine; by PKC). Residues 190 to 212 (SSTASTANANPSGSGATSSAPPS) are compositionally biased toward low complexity. ANK repeat units follow at residues 229-261 (DGDT…LLNI), 265-294 (VAQT…EPTV), 298-327 (HGNT…ATEI), 361-390 (DGER…DINA), and 395-424 (SGRT…KLNL). 2 positions are modified to phosphothreonine; by PKC: Thr-293 and Thr-319. At Ser-395 the chain carries Phosphoserine; by PKC.

The protein belongs to the NF-kappa-B inhibitor family. Phosphorylated isoform A binds to dorsal (dl); inhibits dl translocation to the nucleus and therefore from binding to DNA. In vitro, interacts with IKKbeta. Interacts with cactin and kappa-B-Ras. In terms of processing, activated IKKbeta phosphorylates cact. As to expression, expressed in ovary (at protein level).

The protein localises to the cytoplasm. Its function is as follows. Involved in the formation of the dorsoventral pattern. It inhibits nuclear translocation of the dorsal morphogen in the dorsal region of the embryo. Acts as a negative regulator of the NF-kappa-B (rel) signaling pathway. Cact is degraded by IKKbeta, this is essential for NF-kappa-B (rel) activation. In Drosophila melanogaster (Fruit fly), this protein is NF-kappa-B inhibitor cactus (cact).